Reading from the N-terminus, the 420-residue chain is 3-isopropylmalate dehydratase large subunit (420 aa).

Residues Cys300, Cys360, and Cys363 each contribute to the [4Fe-4S] cluster site.

The protein belongs to the aconitase/IPM isomerase family. LeuC type 2 subfamily. Heterodimer of LeuC and LeuD. [4Fe-4S] cluster serves as cofactor.

It catalyses the reaction (2R,3S)-3-isopropylmalate = (2S)-2-isopropylmalate. Its pathway is amino-acid biosynthesis; L-leucine biosynthesis; L-leucine from 3-methyl-2-oxobutanoate: step 2/4. Functionally, catalyzes the isomerization between 2-isopropylmalate and 3-isopropylmalate, via the formation of 2-isopropylmaleate. The polypeptide is 3-isopropylmalate dehydratase large subunit (Halothermothrix orenii (strain H 168 / OCM 544 / DSM 9562)).